The following is a 348-amino-acid chain: uncharacterized protein (348 aa).

The protein belongs to the Mu gp47/PBSX XkdT family.

This is an uncharacterized protein from Bacillus subtilis (strain 168).